Reading from the N-terminus, the 78-residue chain is Conotoxin Cl14.9 (78 aa).

Residues 1 to 22 (MTAKATLLVLALVVMATSGVSS) form the signal peptide. Positions 23-47 (ASVAGGPVVNSDTVSRSDPERLSTR) are excised as a propeptide. Isoleucine amide is present on Ile-70. Positions 74-78 (DITQQ) are excised as a propeptide.

In terms of processing, contains 2 disulfide bonds. As to expression, expressed by the venom duct.

It is found in the secreted. This chain is Conotoxin Cl14.9, found in Californiconus californicus (California cone).